Here is a 150-residue protein sequence, read N- to C-terminus: uncharacterized protein (150 aa).

To A.tumefaciens conjugal transfer protein TraB.

This is an uncharacterized protein from Agrobacterium tumefaciens (strain 15955).